The sequence spans 295 residues: Protein transport protein SSO2 (295 aa).

Positions 1–18 (MSNPYQNSQNGYQQNNSY) are enriched in low complexity. The interval 1–31 (MSNPYQNSQNGYQQNNSYELNNYPNKQYSSS) is disordered. Topologically, residues 1-270 (MSNPYQNSQN…SAKSARKKKL (270 aa)) are cytoplasmic. The segment covering 19-31 (ELNNYPNKQYSSS) has biased composition (polar residues). Residues 33–110 (EDDFVQFMNE…NRIKNVQTQA (78 aa)) are a coiled coil. The region spanning 196 to 258 (LNEVQVRHRE…EQGVGHTNKA (63 aa)) is the t-SNARE coiled-coil homology domain. A helical; Anchor for type IV membrane protein membrane pass occupies residues 271–291 (WCFFICLLIVIILAVILGAYF). Residues 292 to 295 (GTRK) are Extracellular-facing.

It belongs to the syntaxin family.

Its subcellular location is the membrane. Late secretory t-SNARE protein required for secretion and proper cytokinesis. Plays an important role in the secretion of virulence-associated extracellular enzymes and vesicle-mediated polarized hyphal growth. The sequence is that of Protein transport protein SSO2 (SSO2) from Candida albicans (strain SC5314 / ATCC MYA-2876) (Yeast).